Reading from the N-terminus, the 311-residue chain is Lipoyl synthase (311 aa).

7 residues coordinate [4Fe-4S] cluster: C47, C52, C58, C73, C77, C80, and S286. Residues 59–276 enclose the Radical SAM core domain; that stretch reads WSRHTATYLA…RSVGESLGLF (218 aa).

The protein belongs to the radical SAM superfamily. Lipoyl synthase family. Requires [4Fe-4S] cluster as cofactor.

It is found in the cytoplasm. The enzyme catalyses [[Fe-S] cluster scaffold protein carrying a second [4Fe-4S](2+) cluster] + N(6)-octanoyl-L-lysyl-[protein] + 2 oxidized [2Fe-2S]-[ferredoxin] + 2 S-adenosyl-L-methionine + 4 H(+) = [[Fe-S] cluster scaffold protein] + N(6)-[(R)-dihydrolipoyl]-L-lysyl-[protein] + 4 Fe(3+) + 2 hydrogen sulfide + 2 5'-deoxyadenosine + 2 L-methionine + 2 reduced [2Fe-2S]-[ferredoxin]. It participates in protein modification; protein lipoylation via endogenous pathway; protein N(6)-(lipoyl)lysine from octanoyl-[acyl-carrier-protein]: step 2/2. Catalyzes the radical-mediated insertion of two sulfur atoms into the C-6 and C-8 positions of the octanoyl moiety bound to the lipoyl domains of lipoate-dependent enzymes, thereby converting the octanoylated domains into lipoylated derivatives. In Chlamydia trachomatis serovar A (strain ATCC VR-571B / DSM 19440 / HAR-13), this protein is Lipoyl synthase.